The following is a 187-amino-acid chain: Peptidoglycan-recognition protein 3 (187 aa).

Positions 1-19 are cleaved as a signal peptide; it reads MKAFLVALLISIELALVFA. 2 disulfide bridges follow: Cys-21/Cys-144 and Cys-58/Cys-64. The N-acetylmuramoyl-L-alanine amidase domain occupies 43 to 170; that stretch reads KPLKYVIINH…RTIRQTNSPG (128 aa). Asn-51 is a glycosylation site (N-linked (GlcNAc...) asparagine).

The protein belongs to the N-acetylmuramoyl-L-alanine amidase 2 family.

The protein localises to the secreted. Functionally, peptidoglycan-recognition protein probably involved in innate immunity by binding to peptidoglycans (PGN) of bacteria and activating the prophenoloxidase (proPO) cascade immune response. Binds to 1,3-beta-D-glucan and PGN. This is Peptidoglycan-recognition protein 3 (PGRP-3) from Holotrichia diomphalia (Korean black chafer).